Reading from the N-terminus, the 320-residue chain is Phosphatidylserine decarboxylase proenzyme (320 aa).

Catalysis depends on charge relay system; for autoendoproteolytic cleavage activity residues D90, H147, and S254. Residue S254 is the Schiff-base intermediate with substrate; via pyruvic acid; for decarboxylase activity of the active site. Pyruvic acid (Ser); by autocatalysis is present on S254. Residues 290 to 320 (TAAAEPAPLPEEEIRAEHRASPLVDDKQDQG) are disordered. Basic and acidic residues predominate over residues 301 to 320 (EEIRAEHRASPLVDDKQDQG).

Belongs to the phosphatidylserine decarboxylase family. PSD-B subfamily. Prokaryotic type I sub-subfamily. As to quaternary structure, heterodimer of a large membrane-associated beta subunit and a small pyruvoyl-containing alpha subunit. Pyruvate serves as cofactor. In terms of processing, is synthesized initially as an inactive proenzyme. Formation of the active enzyme involves a self-maturation process in which the active site pyruvoyl group is generated from an internal serine residue via an autocatalytic post-translational modification. Two non-identical subunits are generated from the proenzyme in this reaction, and the pyruvate is formed at the N-terminus of the alpha chain, which is derived from the carboxyl end of the proenzyme. The autoendoproteolytic cleavage occurs by a canonical serine protease mechanism, in which the side chain hydroxyl group of the serine supplies its oxygen atom to form the C-terminus of the beta chain, while the remainder of the serine residue undergoes an oxidative deamination to produce ammonia and the pyruvoyl prosthetic group on the alpha chain. During this reaction, the Ser that is part of the protease active site of the proenzyme becomes the pyruvoyl prosthetic group, which constitutes an essential element of the active site of the mature decarboxylase.

The protein resides in the cell membrane. It catalyses the reaction a 1,2-diacyl-sn-glycero-3-phospho-L-serine + H(+) = a 1,2-diacyl-sn-glycero-3-phosphoethanolamine + CO2. It functions in the pathway phospholipid metabolism; phosphatidylethanolamine biosynthesis; phosphatidylethanolamine from CDP-diacylglycerol: step 2/2. Its function is as follows. Catalyzes the formation of phosphatidylethanolamine (PtdEtn) from phosphatidylserine (PtdSer). This Klebsiella pneumoniae subsp. pneumoniae (strain ATCC 700721 / MGH 78578) protein is Phosphatidylserine decarboxylase proenzyme.